Consider the following 164-residue polypeptide: MRLILAAVGRLKAGPERELASRYRDRAAQLGRGLGFPSCDNVEIPESRARRAPDRCAEEAAALATYLPSGGVLVAYDERGRADLGSEALAERVAGWRDAARPALVVTIGGPDGLDASIRTRAELILSFGAATLPHGLVRVLALEQLYRSLTILAGHPYHRGEAG.

An S-adenosyl-L-methionine-binding site is contributed by Gly-109.

Belongs to the RNA methyltransferase RlmH family. In terms of assembly, homodimer.

The protein localises to the cytoplasm. The catalysed reaction is pseudouridine(1915) in 23S rRNA + S-adenosyl-L-methionine = N(3)-methylpseudouridine(1915) in 23S rRNA + S-adenosyl-L-homocysteine + H(+). Its function is as follows. Specifically methylates the pseudouridine at position 1915 (m3Psi1915) in 23S rRNA. The sequence is that of Ribosomal RNA large subunit methyltransferase H from Methylobacterium radiotolerans (strain ATCC 27329 / DSM 1819 / JCM 2831 / NBRC 15690 / NCIMB 10815 / 0-1).